The chain runs to 461 residues: Pancreatic triacylglycerol lipase (461 aa).

The first 12 residues, 1-12 (WTLSLLLGAVVG), serve as a signal peptide directing secretion. Disulfide bonds link C16-C22 and C103-C114. S165 serves as the catalytic Nucleophile. The active-site Charge relay system is D189. Ca(2+) is bound by residues E200, R203, D205, and D208. Residues C250 and C274 are joined by a disulfide bond. H276 functions as the Charge relay system in the catalytic mechanism. 3 disulfide bridges follow: C298-C309, C312-C317, and C445-C461. The region spanning 351-461 (WRYRVDVTLS…EDVLLTLTAC (111 aa)) is the PLAT domain.

It belongs to the AB hydrolase superfamily. Lipase family. In terms of assembly, forms a 1:1 stoichiometric complex with (pro)colipase/CLPS.

The protein resides in the secreted. It catalyses the reaction a triacylglycerol + H2O = a diacylglycerol + a fatty acid + H(+). It carries out the reaction 1,2,3-tributanoylglycerol + H2O = dibutanoylglycerol + butanoate + H(+). The enzyme catalyses 1,2,3-tri-(9Z-octadecenoyl)-glycerol + H2O = di-(9Z)-octadecenoylglycerol + (9Z)-octadecenoate + H(+). The catalysed reaction is all-trans-retinyl hexadecanoate + H2O = all-trans-retinol + hexadecanoate + H(+). It catalyses the reaction 1,2-di-(9Z-octadecenoyl)-glycerol + H2O = (9Z-octadecenoyl)-glycerol + (9Z)-octadecenoate + H(+). Its activity is regulated as follows. Inhibited by bile salts, is reactivated by (pro)colipase/CLPS. Its function is as follows. Plays an important role in fat metabolism. It preferentially splits the esters of long-chain fatty acids at positions 1 and 3, producing mainly 2-monoacylglycerol and free fatty acids, and shows considerably higher activity against insoluble emulsified substrates than against soluble ones. The chain is Pancreatic triacylglycerol lipase (PNLIP) from Equus caballus (Horse).